Here is a 572-residue protein sequence, read N- to C-terminus: Transducin-like enhancer protein 6 (572 aa).

Disordered regions lie at residues 1-30, 92-121, and 174-236; these read MTSR…SSPT, QSEE…SSFE, and KAKP…VQEP. A compositionally biased stretch (polar residues) spans 14–30; the sequence is KSTSPCPGISNSESSPT. WD repeat units lie at residues 284–322, 332–372, 377–416, 419–456, 458–497, 499–538, and 540–571; these read AHGE…AEDR, TPGA…LHVK, CAGL…VVRD, GYPD…KPLE, QFKS…RHMV, QKDS…KVFE, and PEMS…YQIT. A Phosphoserine; by PKA modification is found at serine 510.

This sequence belongs to the WD repeat Groucho/TLE family. Homodimers. Component of the subcortical maternal complex (SCMC), at least composed of NLRP5, KHDC3, OOEP, and TLE6. Within the complex, interacts with NLRP5, KHDC3 and OOEP. The SCMC may facilitate translocation of its components between the nuclear and cytoplasmic compartments. As part of the SCMC interacts with the SCMC-associated protein ZBED3. As part of the SCMC interacts with the SCMC-associated protein NLRP4F. As part of the SCMC interacts with the SCMC-associated protein CFL1/Cofilin-1. Interacts with FOXG1/BF-1; the interaction inhibits TLE1 interaction with FOXG1/BF-1. Interacts with NFATC1. Interacts with PAX6. In terms of assembly, component of the subcortical maternal complex (SCMC), at least composed of NLRP5, KHDC3L, OOEP, and TLE6 isoform 1. Within the complex, interacts with NLRP5, KHDC3L and OOEP. The SCMC may facilitate translocation of its components between the nuclear and cytoplasmic compartments.

It localises to the cytoplasm. Its subcellular location is the nucleus. Component of the subcortical maternal complex (SCMC), a multiprotein complex that plays a key role in early embryonic development. The SCMC complex is a structural constituent of cytoplasmic lattices, which consist in fibrous structures found in the cytoplasm of oocytes and preimplantation embryos. They are required to store maternal proteins critical for embryonic development, such as proteins that control epigenetic reprogramming of the preimplantation embryo, and prevent their degradation or activation. Also required for spermatogenesis: regulates spermatogonia proliferation and cell cycle progression, potentially via regulation of cell cycle regulatory genes such as; CEBPB, CEBPA, CSF3, PCNA, and CDK4. Suppresses FOXG1/BF-1-mediated transcriptional repression by inhibiting interaction of the transcriptional corepressor TLE1 with FOXG1 which promotes cortical neuron differentiation. Acts as a transcriptional corepressor of NFATC1-mediated gene expression by contributing to PAX6-mediated repression. Its function is as follows. Component of the subcortical maternal complex (SCMC), a multiprotein complex that plays a key role in early embryonic development. This is Transducin-like enhancer protein 6 from Homo sapiens (Human).